A 172-amino-acid polypeptide reads, in one-letter code: Adenine phosphoribosyltransferase (172 aa).

It belongs to the purine/pyrimidine phosphoribosyltransferase family. As to quaternary structure, homodimer.

It is found in the cytoplasm. It carries out the reaction AMP + diphosphate = 5-phospho-alpha-D-ribose 1-diphosphate + adenine. It participates in purine metabolism; AMP biosynthesis via salvage pathway; AMP from adenine: step 1/1. Functionally, catalyzes a salvage reaction resulting in the formation of AMP, that is energically less costly than de novo synthesis. This chain is Adenine phosphoribosyltransferase, found in Exiguobacterium sp. (strain ATCC BAA-1283 / AT1b).